Reading from the N-terminus, the 60-residue chain is UPF0434 protein YPA_0693 (60 aa).

Belongs to the UPF0434 family.

The polypeptide is UPF0434 protein YPA_0693 (Yersinia pestis bv. Antiqua (strain Antiqua)).